We begin with the raw amino-acid sequence, 434 residues long: Tryptamine hydroxycinnamoyltransferase 2 (434 aa).

Active-site proton acceptor residues include histidine 154 and aspartate 380.

Belongs to the plant acyltransferase family.

Functionally, hydroxycinnamoyl transferase that catalyzes the transfer of an acyl from p-coumaryol-CoA to tryptamine, to produce coumaroyl tryptamine. Serotonin and tyramine serve as acyl acceptors in vitro. Can use caffeoyl-CoA, and to a lesser extent feruloyl-CoA, as acyl donors. The chain is Tryptamine hydroxycinnamoyltransferase 2 from Oryza sativa subsp. japonica (Rice).